The sequence spans 247 residues: MGAVEARLRSELKKRKTLLFALIDSEVSDTKSAQDLARGAEKAGASAILVGGSSTGDQAETSRIVGDIKEATTIPVILFPGNVTGVAPGADAILFSSLMNSENPYFITQAQALGAPSVLKFGLEALPTAYLVIGEGTSVWFVGAARGIPLGKPRIAAAYSLAARFLGMRFVYLEAGSGAESPVKPEMIRAVREAFDGFLIVGGGIRDEEAARRASEAGADAIVIGTMLEGGGSLDKLSRIAGAIGGT.

Mg(2+) is bound by residues aspartate 24 and serine 53. Residues 172–178 (YLEAGSG), 203–204 (GG), and 225–226 (GT) each bind sn-glycerol 1-phosphate.

It belongs to the GGGP/HepGP synthase family. Group II subfamily. Mg(2+) is required as a cofactor.

The protein localises to the cytoplasm. The catalysed reaction is sn-glycerol 1-phosphate + (2E,6E,10E)-geranylgeranyl diphosphate = sn-3-O-(geranylgeranyl)glycerol 1-phosphate + diphosphate. The protein operates within membrane lipid metabolism; glycerophospholipid metabolism. Functionally, prenyltransferase that catalyzes the transfer of the geranylgeranyl moiety of geranylgeranyl diphosphate (GGPP) to the C3 hydroxyl of sn-glycerol-1-phosphate (G1P). This reaction is the first ether-bond-formation step in the biosynthesis of archaeal membrane lipids. The protein is Geranylgeranylglyceryl phosphate synthase of Cenarchaeum symbiosum (strain A).